We begin with the raw amino-acid sequence, 444 residues long: GTPase Der (444 aa).

2 EngA-type G domains span residues 2 to 167 and 173 to 349; these read LKVA…LKEI and FKFC…ENLN. GTP-binding positions include 8-15, 55-59, 118-121, 179-186, 226-230, and 291-294; these read GKPNVGKS, DTGGL, NKSE, GRPNVGKS, DTAGI, and NKWD. The KH-like domain occupies 350 to 434; the sequence is LKFNSKILTD…PITLYFKNKT (85 aa).

Belongs to the TRAFAC class TrmE-Era-EngA-EngB-Septin-like GTPase superfamily. EngA (Der) GTPase family. As to quaternary structure, associates with the 50S ribosomal subunit.

GTPase that plays an essential role in the late steps of ribosome biogenesis. The polypeptide is GTPase Der (Malacoplasma penetrans (strain HF-2) (Mycoplasma penetrans)).